A 442-amino-acid polypeptide reads, in one-letter code: Serine--tRNA ligase (442 aa).

244 to 246 contacts L-serine; that stretch reads TAE. Position 275–277 (275–277) interacts with ATP; the sequence is RAE. Position 298 (Glu298) interacts with L-serine. 365-368 is an ATP binding site; the sequence is EISS. Ser400 provides a ligand contact to L-serine.

The protein belongs to the class-II aminoacyl-tRNA synthetase family. Type-1 seryl-tRNA synthetase subfamily. As to quaternary structure, homodimer. The tRNA molecule binds across the dimer.

The protein localises to the cytoplasm. The enzyme catalyses tRNA(Ser) + L-serine + ATP = L-seryl-tRNA(Ser) + AMP + diphosphate + H(+). It catalyses the reaction tRNA(Sec) + L-serine + ATP = L-seryl-tRNA(Sec) + AMP + diphosphate + H(+). It functions in the pathway aminoacyl-tRNA biosynthesis; selenocysteinyl-tRNA(Sec) biosynthesis; L-seryl-tRNA(Sec) from L-serine and tRNA(Sec): step 1/1. In terms of biological role, catalyzes the attachment of serine to tRNA(Ser). Is also able to aminoacylate tRNA(Sec) with serine, to form the misacylated tRNA L-seryl-tRNA(Sec), which will be further converted into selenocysteinyl-tRNA(Sec). In Bradyrhizobium sp. (strain ORS 278), this protein is Serine--tRNA ligase.